A 608-amino-acid chain; its full sequence is Rap1 GTPase-GDP dissociation stimulator 1 (608 aa).

ARM repeat units lie at residues 89 to 131 (GLIS…DQAG) and 171 to 212 (DSLQ…NLAE). The prevents binding to prenylated RHOA stretch occupies residues 122 to 171 (EGRSAVDQAGGAQIVVDHLRSLCSKTDPASEKLLTVFCGMLMNYSNEKND). K231 is modified (N6-acetyllysine). 3 ARM repeats span residues 348–391 (DGNC…NLAI), 392–432 (PVVN…MLID), and 480–520 (SKDV…LIAA).

As to quaternary structure, interacts with RABL3. Interacts with RHOT1. Interacts with unprenylated RHOA; the interaction is direct. Interacts with RAP1A. Interacts with KRAS. Interacts with RAC1. Interacts with RAP1B. Preferentially interacts with unprenylated GTPases that will become geranylgeranylated. May also interact with prenylated GTPases. In terms of assembly, interacts with prenylated RHOA; the interaction is direct and in a 1:1 stoichiometry. Interacts with RAP1A. Interacts with KRAS. Interacts with RAC1. Interacts with RAP1B. Preferentially interacts with prenylated GTPases. The N-terminus is blocked. Post-translationally, forms covalent cross-links mediated by transglutaminase TGM2, between a glutamine and the epsilon-amino group of a lysine residue, forming homopolymers and heteropolymers. As to expression, brain.

It localises to the cytoplasm. It is found in the cytosol. The protein resides in the endoplasmic reticulum. The protein localises to the mitochondrion. Its subcellular location is the nucleus. In terms of biological role, acts as a GEF (guanine nucleotide exchange factor) for the Rho family of small GTP-binding proteins (G proteins) that stimulates the dissociation of GDP to enable subsequent binding of GTP. Additionally, appears to chaperone the processing and/or trafficking of small GTPases containing a C-terminal polybasic region independently of GEF activity. Targets include RAP1A/RAP1B, RHOA, RHOB, RHOC, RAC1 and KRAS. Regulates mitochondrial dynamics by controlling RHOT function to promote mitochondrial fission during high calcium conditions. Able to promote the Ca(2+) release from the endoplasmic reticulum via both inositol trisphosphate (Ins3P) and ryanodine sensitive receptors leading to a enhanced mitochondrial Ca(2+) uptake. Acts as a GEF (guanine nucleotide exchange factor) for unprenylated RHOA. Chaperones the entry and passage of small GTPases through the prenylation pathway. Recognizes the last amino acid in the GTPase C-terminal CAAX motif with a preference for 'Leu' over 'Met', indicating involvement in the geranylgeranylation pathway. May also recognize prenylated GTPases. Functionally, acts as a GEF (guanine nucleotide exchange factor) for prenylated RHOA. Acts as a GEF for RHOC. Chaperones the downstream trafficking and/or processing of small newly prenylated GTPases. Escorts RAC1 to the nucleus. The protein is Rap1 GTPase-GDP dissociation stimulator 1 (RAP1GDS1) of Bos taurus (Bovine).